The sequence spans 251 residues: Putative integrase/recombinase y4eF (251 aa).

In terms of domain architecture, Core-binding (CB) spans 1-40 (MLGREDIRTYQVYLANEKKLAPGSIHIALSALRFFFNVTL). Residues 58 to 231 (KLPIILSPDE…ATNKVCATES (174 aa)) enclose the Tyr recombinase domain. Residues Arg-93, Lys-118, His-183, Arg-186, and His-209 contribute to the active site. The active-site O-(3'-phospho-DNA)-tyrosine intermediate is the Tyr-218.

It belongs to the 'phage' integrase family.

This Sinorhizobium fredii (strain NBRC 101917 / NGR234) protein is Putative integrase/recombinase y4eF.